Consider the following 67-residue polypeptide: Probable tautomerase bsl7456 (67 aa).

P2 functions as the Proton acceptor; via imino nitrogen in the catalytic mechanism.

Belongs to the 4-oxalocrotonate tautomerase family.

The polypeptide is Probable tautomerase bsl7456 (Bradyrhizobium diazoefficiens (strain JCM 10833 / BCRC 13528 / IAM 13628 / NBRC 14792 / USDA 110)).